Consider the following 528-residue polypeptide: Probable serine protease HtrA1 (528 aa).

A disordered region spans residues 1 to 70; the sequence is MDTRVDTDNA…RPSGVQGSFV (70 aa). Residues 1–178 lie on the Cytoplasmic side of the membrane; the sequence is MDTRVDTDNA…DVLFGGKVSY (178 aa). A compositionally biased stretch (gly residues) spans 31 to 40; that stretch reads NNGGPNGGGR. A helical membrane pass occupies residues 179-199; it reads LALGILVAIALVIGGIGGVIG. Topologically, residues 200–528 are periplasmic; it reads RKTAEVVDAF…LTVKPDPDST (329 aa). Active-site charge relay system residues include H270, D306, and S387. The 62-residue stretch at 426–487 folds into the PDZ domain; it reads LVANSLIKDG…VIVKVGNRAV (62 aa).

This sequence belongs to the peptidase S1C family. In terms of assembly, the C-terminal region exhibits both monomeric and trimeric forms in solution.

It is found in the cell inner membrane. It carries out the reaction Acts on substrates that are at least partially unfolded. The cleavage site P1 residue is normally between a pair of hydrophobic residues, such as Val-|-Val.. Its function is as follows. Essential protein that may act as a regulatory protease that is conditionally activated upon appropriate environmental triggers. In Mycobacterium tuberculosis (strain ATCC 25618 / H37Rv), this protein is Probable serine protease HtrA1.